Reading from the N-terminus, the 348-residue chain is Nicotinate-nucleotide pyrophosphorylase [carboxylating], chloroplastic (348 aa).

Residues 1 to 41 (MISVSRFLSPQFYAIPRSFVKMSASATQTAGEVSMGIKPPS) constitute a chloroplast transit peptide. Residues R139, 170-172 (TRK), R194, K204, E237, D264, 296-298 (SGN), and 317-319 (SGA) contribute to the substrate site.

Belongs to the NadC/ModD family.

It is found in the plastid. It localises to the chloroplast. The enzyme catalyses nicotinate beta-D-ribonucleotide + CO2 + diphosphate = quinolinate + 5-phospho-alpha-D-ribose 1-diphosphate + 2 H(+). The protein operates within cofactor biosynthesis; NAD(+) biosynthesis; nicotinate D-ribonucleotide from quinolinate: step 1/1. Its function is as follows. Involved in the biosynthesis of NAD(+). Catalyzes the conversion of quinolate to nicotinate to nicotinate beta-D-ribonucleotide. This chain is Nicotinate-nucleotide pyrophosphorylase [carboxylating], chloroplastic, found in Arabidopsis thaliana (Mouse-ear cress).